We begin with the raw amino-acid sequence, 443 residues long: Mitochondrial enolase superfamily member 1 (443 aa).

Substrate contacts are provided by residues 24-26 (GSD) and Y34. S148 bears the Phosphoserine mark. K220 provides a ligand contact to substrate. K222 acts as the Proton donor/acceptor in catalysis. A Mg(2+)-binding site is contributed by D250. Substrate contacts are provided by residues N252, E276, E305, 355–357 (HAG), and E386. The Mg(2+) site is built by E276 and E305. Residue H355 is part of the active site.

The protein belongs to the mandelate racemase/muconate lactonizing enzyme family. ENOSF1 subfamily. It depends on Mg(2+) as a cofactor. In terms of processing, could be sumoylated.

The protein localises to the mitochondrion. It carries out the reaction L-fuconate = 2-dehydro-3-deoxy-L-fuconate + H2O. Plays a role in the catabolism of L-fucose, a sugar that is part of the carbohydrates that are attached to cellular glycoproteins. Catalyzes the dehydration of L-fuconate to 2-keto-3-deoxy-L-fuconate by the abstraction of the 2-proton to generate an enediolate intermediate that is stabilized by the magnesium ion. May down-regulate thymidylate synthase activity, possibly already at the RNA level, by promoting the degradation of TYMS mRNA via an antisense RNA-based mechanism. This is Mitochondrial enolase superfamily member 1 (ENOSF1) from Pongo abelii (Sumatran orangutan).